Reading from the N-terminus, the 345-residue chain is Methionine import ATP-binding protein MetN (345 aa).

An ABC transporter domain is found at 2–241; sequence IKLKNISKVF…PKTLLAQEFI (240 aa). Position 38–45 (38–45) interacts with ATP; the sequence is GASGAGKS.

Belongs to the ABC transporter superfamily. Methionine importer (TC 3.A.1.24) family. As to quaternary structure, the complex is composed of two ATP-binding proteins (MetN), two transmembrane proteins (MetI) and a solute-binding protein (MetQ).

The protein resides in the cell inner membrane. It catalyses the reaction L-methionine(out) + ATP + H2O = L-methionine(in) + ADP + phosphate + H(+). The enzyme catalyses D-methionine(out) + ATP + H2O = D-methionine(in) + ADP + phosphate + H(+). Functionally, part of the ABC transporter complex MetNIQ involved in methionine import. Responsible for energy coupling to the transport system. In Histophilus somni (strain 129Pt) (Haemophilus somnus), this protein is Methionine import ATP-binding protein MetN.